The following is a 343-amino-acid chain: Heat-inducible transcription repressor HrcA (343 aa).

The protein belongs to the HrcA family.

Its function is as follows. Negative regulator of class I heat shock genes (grpE-dnaK-dnaJ and groELS operons). Prevents heat-shock induction of these operons. This Mycolicibacterium vanbaalenii (strain DSM 7251 / JCM 13017 / BCRC 16820 / KCTC 9966 / NRRL B-24157 / PYR-1) (Mycobacterium vanbaalenii) protein is Heat-inducible transcription repressor HrcA.